Consider the following 148-residue polypeptide: Large ribosomal subunit protein uL15 (148 aa).

The tract at residues 1–57 (MRLNDVKPQKGSKKRRRRVGRGISAGQGASAGLGMRGQKSRSGSGTRPGFEGGQQPL) is disordered. A compositionally biased stretch (basic residues) spans 10-20 (KGSKKRRRRVG). Residues 23 to 35 (ISAGQGASAGLGM) show a composition bias toward gly residues.

It belongs to the universal ribosomal protein uL15 family. As to quaternary structure, part of the 50S ribosomal subunit.

Its function is as follows. Binds to the 23S rRNA. The chain is Large ribosomal subunit protein uL15 from Trichormus variabilis (strain ATCC 29413 / PCC 7937) (Anabaena variabilis).